A 272-amino-acid polypeptide reads, in one-letter code: Putative pyruvate, phosphate dikinase regulatory protein 1 (272 aa).

151–158 (GISRTSKT) contributes to the ADP binding site.

The protein belongs to the pyruvate, phosphate/water dikinase regulatory protein family. PDRP subfamily.

It catalyses the reaction N(tele)-phospho-L-histidyl/L-threonyl-[pyruvate, phosphate dikinase] + ADP = N(tele)-phospho-L-histidyl/O-phospho-L-threonyl-[pyruvate, phosphate dikinase] + AMP + H(+). The enzyme catalyses N(tele)-phospho-L-histidyl/O-phospho-L-threonyl-[pyruvate, phosphate dikinase] + phosphate + H(+) = N(tele)-phospho-L-histidyl/L-threonyl-[pyruvate, phosphate dikinase] + diphosphate. In terms of biological role, bifunctional serine/threonine kinase and phosphorylase involved in the regulation of the pyruvate, phosphate dikinase (PPDK) by catalyzing its phosphorylation/dephosphorylation. This chain is Putative pyruvate, phosphate dikinase regulatory protein 1, found in Staphylococcus epidermidis (strain ATCC 35984 / DSM 28319 / BCRC 17069 / CCUG 31568 / BM 3577 / RP62A).